The chain runs to 397 residues: MPATITDHKEFQNYAINFGPQHPAAHGVLRLLLELDGEVVERADPHVGLLHRGTEKLLEQKTYIQGTPYFDRLDYMSMMSEEHAWVIAVERLGQIEVPERAQYIRTIYAEITRFINHLLFFAAHGLDVGAMTMFLYCFREREELMDIYEAACGARMHANYFRPGGVARDLPDGLEQRIRDFCNHFPSKLDEYETLLTNNRIWKQRLVDIGKVSQEDAFSWGFTGPMLRGSGVAFDLRKAEPYDAYDRVEFDIPVGKNGDSYDRYLVRIEECREGVKIIQQCLDQMQPGPVRNDNFKISMPYRQDMQQDMESMIHHFKLCTEGFNLPAGEVYAAVETPKGELGVYLVSDGGNKPYRARIRAAGFNHLQAVKEMARGHMIADVTTIIGSIDIVFGEIDR.

Belongs to the complex I 49 kDa subunit family. As to quaternary structure, NDH-1 is composed of 14 different subunits. Subunits NuoB, C, D, E, F, and G constitute the peripheral sector of the complex.

The protein localises to the cell inner membrane. It catalyses the reaction a quinone + NADH + 5 H(+)(in) = a quinol + NAD(+) + 4 H(+)(out). Functionally, NDH-1 shuttles electrons from NADH, via FMN and iron-sulfur (Fe-S) centers, to quinones in the respiratory chain. The immediate electron acceptor for the enzyme in this species is believed to be ubiquinone. Couples the redox reaction to proton translocation (for every two electrons transferred, four hydrogen ions are translocated across the cytoplasmic membrane), and thus conserves the redox energy in a proton gradient. This Magnetococcus marinus (strain ATCC BAA-1437 / JCM 17883 / MC-1) protein is NADH-quinone oxidoreductase subunit D.